Here is a 431-residue protein sequence, read N- to C-terminus: Serine--tRNA ligase (431 aa).

237–239 lines the L-serine pocket; that stretch reads TAE. Residue 268-270 participates in ATP binding; sequence RSE. Glu291 is a binding site for L-serine. An ATP-binding site is contributed by 355–358; it reads EISS. Ser390 is an L-serine binding site.

The protein belongs to the class-II aminoacyl-tRNA synthetase family. Type-1 seryl-tRNA synthetase subfamily. In terms of assembly, homodimer. The tRNA molecule binds across the dimer.

It is found in the cytoplasm. The catalysed reaction is tRNA(Ser) + L-serine + ATP = L-seryl-tRNA(Ser) + AMP + diphosphate + H(+). It carries out the reaction tRNA(Sec) + L-serine + ATP = L-seryl-tRNA(Sec) + AMP + diphosphate + H(+). Its pathway is aminoacyl-tRNA biosynthesis; selenocysteinyl-tRNA(Sec) biosynthesis; L-seryl-tRNA(Sec) from L-serine and tRNA(Sec): step 1/1. In terms of biological role, catalyzes the attachment of serine to tRNA(Ser). Is also able to aminoacylate tRNA(Sec) with serine, to form the misacylated tRNA L-seryl-tRNA(Sec), which will be further converted into selenocysteinyl-tRNA(Sec). The protein is Serine--tRNA ligase of Neisseria meningitidis serogroup C (strain 053442).